The chain runs to 146 residues: Anti-sigma F factor (146 aa).

Belongs to the anti-sigma-factor family.

The enzyme catalyses L-seryl-[protein] + ATP = O-phospho-L-seryl-[protein] + ADP + H(+). It catalyses the reaction L-threonyl-[protein] + ATP = O-phospho-L-threonyl-[protein] + ADP + H(+). Binds to sigma F and blocks its ability to form an RNA polymerase holoenzyme (E-sigma F). Phosphorylates SpoIIAA on a serine residue. This phosphorylation may enable SpoIIAA to act as an anti-anti-sigma factor that counteracts SpoIIAB and thus releases sigma F from inhibition. The protein is Anti-sigma F factor of Geobacillus stearothermophilus (Bacillus stearothermophilus).